The sequence spans 327 residues: Zinc transport protein ZntB (327 aa).

At 1-273 the chain is on the cytoplasmic side; it reads MEAIKGSDVN…ARRTYTMSLM (273 aa). The chain crosses the membrane as a helical span at residues 274 to 294; it reads AMVFLPSTFLTGLFGVNLGGI. Over 295 to 300 the chain is Periplasmic; it reads PGGGWQ. Residues 301–321 form a helical membrane-spanning segment; sequence FGFSIFCILLVVLIGGVALWL. Topologically, residues 322 to 327 are cytoplasmic; that stretch reads HRSKWL.

Belongs to the CorA metal ion transporter (MIT) (TC 1.A.35) family.

It is found in the cell inner membrane. It catalyses the reaction Zn(2+)(out) + H(+)(out) = Zn(2+)(in) + H(+)(in). Zinc transporter. Acts as a Zn(2+):proton symporter, which likely mediates zinc ion uptake. This Escherichia coli O6:K15:H31 (strain 536 / UPEC) protein is Zinc transport protein ZntB.